The primary structure comprises 346 residues: UPF0283 membrane protein VP1870 (346 aa).

The tract at residues 1-30 is disordered; the sequence is MSELKQKQIFSEKALEKEQQSDSPELTAQK. Polar residues predominate over residues 21–30; that stretch reads SDSPELTAQK. The next 2 membrane-spanning stretches (helical) occupy residues 73–93 and 98–118; these read VFAT…VTAV and WLAL…LGAI.

The protein belongs to the UPF0283 family.

The protein localises to the cell inner membrane. The chain is UPF0283 membrane protein VP1870 from Vibrio parahaemolyticus serotype O3:K6 (strain RIMD 2210633).